A 132-amino-acid chain; its full sequence is Large ribosomal subunit protein bL21 (132 aa).

The disordered stretch occupies residues 111-132 (AAEKPARKPRAKKTNEVTTDGA).

It belongs to the bacterial ribosomal protein bL21 family. As to quaternary structure, part of the 50S ribosomal subunit. Contacts protein L20.

Functionally, this protein binds to 23S rRNA in the presence of protein L20. The sequence is that of Large ribosomal subunit protein bL21 from Dehalococcoides mccartyi (strain CBDB1).